The chain runs to 130 residues: Protein ApaG (130 aa).

Positions 3–127 (STITRDIQIT…FSLDSPFSRQ (125 aa)) constitute an ApaG domain.

This Beijerinckia indica subsp. indica (strain ATCC 9039 / DSM 1715 / NCIMB 8712) protein is Protein ApaG.